Here is a 279-residue protein sequence, read N- to C-terminus: Oxygen-dependent coproporphyrinogen-III oxidase (279 aa).

Position 102 (Ser-102) interacts with substrate. A divalent metal cation contacts are provided by His-106 and His-116. His-116 functions as the Proton donor in the catalytic mechanism. 118–120 lines the substrate pocket; it reads NTR. 2 residues coordinate a divalent metal cation: His-149 and His-179. The tract at residues 244–279 is important for dimerization; the sequence is YVEFNLLYDRGTKFGLMTDGNVEAILMSLPPEVKFN.

This sequence belongs to the aerobic coproporphyrinogen-III oxidase family. Homodimer. A divalent metal cation is required as a cofactor.

Its subcellular location is the cytoplasm. The catalysed reaction is coproporphyrinogen III + O2 + 2 H(+) = protoporphyrinogen IX + 2 CO2 + 2 H2O. Its pathway is porphyrin-containing compound metabolism; protoporphyrin-IX biosynthesis; protoporphyrinogen-IX from coproporphyrinogen-III (O2 route): step 1/1. Its function is as follows. Involved in the heme biosynthesis. Catalyzes the aerobic oxidative decarboxylation of propionate groups of rings A and B of coproporphyrinogen-III to yield the vinyl groups in protoporphyrinogen-IX. The chain is Oxygen-dependent coproporphyrinogen-III oxidase from Rickettsia felis (strain ATCC VR-1525 / URRWXCal2) (Rickettsia azadi).